We begin with the raw amino-acid sequence, 977 residues long: ELMO domain-containing protein A (977 aa).

The 179-residue stretch at 383-561 (EHDALLMKLW…SVKNLIITAL (179 aa)) folds into the ELMO domain. Composition is skewed to low complexity over residues 792 to 838 (SSNN…NNSG) and 852 to 897 (QQQQ…SSSS). A disordered region spans residues 792–899 (SSNNNIKDNL…SSSSSSSSNP (108 aa)).

Associates with mhcA.

Functionally, functions as a negative regulator of actin polymerization. Modulates actin/myosin II at cortex actinomyosins to prevent excessive F-actin polymerization around the cell periphery, thereby maintaining proper cell shape during phagocytosis and chemotaxis. The sequence is that of ELMO domain-containing protein A (elmoA) from Dictyostelium discoideum (Social amoeba).